Consider the following 440-residue polypeptide: Xylose isomerase (440 aa).

Active-site residues include H101 and D104. Residues E232, E268, H271, D296, D307, D309, and D339 each coordinate Mg(2+).

The protein belongs to the xylose isomerase family. In terms of assembly, homotetramer. Mg(2+) serves as cofactor.

Its subcellular location is the cytoplasm. The catalysed reaction is alpha-D-xylose = alpha-D-xylulofuranose. This Cronobacter sakazakii (strain ATCC BAA-894) (Enterobacter sakazakii) protein is Xylose isomerase.